The following is a 465-amino-acid chain: Ribulose bisphosphate carboxylase large chain (465 aa).

Lysine 4 bears the N6,N6,N6-trimethyllysine mark. Substrate is bound by residues asparagine 113 and threonine 163. Lysine 165 (proton acceptor) is an active-site residue. Lysine 167 provides a ligand contact to substrate. Mg(2+)-binding residues include lysine 191, aspartate 193, and glutamate 194. Lysine 191 carries the N6-carboxylysine modification. The Proton acceptor role is filled by histidine 284. Arginine 285, histidine 317, and serine 369 together coordinate substrate.

This sequence belongs to the RuBisCO large chain family. Type I subfamily. As to quaternary structure, heterohexadecamer of 8 large chains and 8 small chains; disulfide-linked. The disulfide link is formed within the large subunit homodimers. Requires Mg(2+) as cofactor. In terms of processing, the disulfide bond which can form in the large chain dimeric partners within the hexadecamer appears to be associated with oxidative stress and protein turnover.

The protein resides in the plastid. Its subcellular location is the chloroplast. It carries out the reaction 2 (2R)-3-phosphoglycerate + 2 H(+) = D-ribulose 1,5-bisphosphate + CO2 + H2O. The enzyme catalyses D-ribulose 1,5-bisphosphate + O2 = 2-phosphoglycolate + (2R)-3-phosphoglycerate + 2 H(+). RuBisCO catalyzes two reactions: the carboxylation of D-ribulose 1,5-bisphosphate, the primary event in carbon dioxide fixation, as well as the oxidative fragmentation of the pentose substrate in the photorespiration process. Both reactions occur simultaneously and in competition at the same active site. The polypeptide is Ribulose bisphosphate carboxylase large chain (Morus rubra (Red mulberry)).